Here is a 204-residue protein sequence, read N- to C-terminus: Large ribosomal subunit protein eL15 (204 aa).

A disordered region spans residues 161–180; that stretch reads MRGLTSAGKKSRGLGKGHKF. Over residues 169 to 180 the composition is skewed to basic residues; it reads KKSRGLGKGHKF.

The protein belongs to the eukaryotic ribosomal protein eL15 family. As to quaternary structure, component of the large ribosomal subunit.

Its subcellular location is the cytoplasm. In terms of biological role, component of the large ribosomal subunit. The ribosome is a large ribonucleoprotein complex responsible for the synthesis of proteins in the cell. The polypeptide is Large ribosomal subunit protein eL15 (rpl15) (Ictalurus punctatus (Channel catfish)).